The following is a 274-amino-acid chain: tRNA-cytidine(32) 2-sulfurtransferase (274 aa).

The short motif at 40–45 (SGGKDS) is the PP-loop motif element. Positions 115, 118, and 206 each coordinate [4Fe-4S] cluster.

It belongs to the TtcA family. As to quaternary structure, homodimer. It depends on Mg(2+) as a cofactor. [4Fe-4S] cluster serves as cofactor.

It localises to the cytoplasm. The enzyme catalyses cytidine(32) in tRNA + S-sulfanyl-L-cysteinyl-[cysteine desulfurase] + AH2 + ATP = 2-thiocytidine(32) in tRNA + L-cysteinyl-[cysteine desulfurase] + A + AMP + diphosphate + H(+). It participates in tRNA modification. Catalyzes the ATP-dependent 2-thiolation of cytidine in position 32 of tRNA, to form 2-thiocytidine (s(2)C32). The sulfur atoms are provided by the cysteine/cysteine desulfurase (IscS) system. This is tRNA-cytidine(32) 2-sulfurtransferase from Pseudomonas putida (strain W619).